We begin with the raw amino-acid sequence, 932 residues long: Protocadherin gamma-A9 (932 aa).

Positions 1 to 28 (MAAPTKCQLRGRLVLLCSLLGMLWEARA) are cleaved as a signal peptide. 6 Cadherin domains span residues 29-133 (SQIR…APKF), 134-242 (QAES…APVF), 243-347 (AQRI…RPEV), 348-452 (TITS…PPAF), 453-562 (SQAS…APEI), and 570-683 (DGST…IPAD). The Extracellular segment spans residues 29-692 (SQIRYSVPEE…DLEASDLTLY (664 aa)). N-linked (GlcNAc...) asparagine glycosylation is found at asparagine 47 and asparagine 127. 3 N-linked (GlcNAc...) asparagine glycosylation sites follow: asparagine 389, asparagine 419, and asparagine 545. A helical transmembrane segment spans residues 693–713 (LVVAVAVVSCVFLTFVITLLA). Topologically, residues 714–932 (LRLRHWHSSH…KKKSGKKEKK (219 aa)) are cytoplasmic. Disordered stretches follow at residues 803 to 841 (DTPL…WPNN) and 902 to 932 (ATLT…KEKK). Residues 816–841 (WRFSQAQRPGTSGSQNGDDTGTWPNN) show a composition bias toward polar residues. Positions 922–932 (NKKKSGKKEKK) are enriched in basic residues.

The protein localises to the cell membrane. Its function is as follows. Potential calcium-dependent cell-adhesion protein. May be involved in the establishment and maintenance of specific neuronal connections in the brain. This chain is Protocadherin gamma-A9 (PCDHGA9), found in Homo sapiens (Human).